A 213-amino-acid polypeptide reads, in one-letter code: Guanylate kinase (213 aa).

Residues 10–189 (GLLLMVVAPS…AYADLAHIYH (180 aa)) enclose the Guanylate kinase-like domain. Position 17 to 24 (17 to 24 (APSGVGKT)) interacts with ATP.

This sequence belongs to the guanylate kinase family.

It localises to the cytoplasm. The enzyme catalyses GMP + ATP = GDP + ADP. Functionally, essential for recycling GMP and indirectly, cGMP. This chain is Guanylate kinase (gmk), found in Caulobacter vibrioides (strain ATCC 19089 / CIP 103742 / CB 15) (Caulobacter crescentus).